The sequence spans 231 residues: Acyl-protein thioesterase 2 (231 aa).

Cys2 carries the S-palmitoyl cysteine lipid modification. Ser82 is modified (phosphoserine). Catalysis depends on charge relay system residues Ser122, Asp176, and His210.

Belongs to the AB hydrolase superfamily. AB hydrolase 2 family. In terms of tissue distribution, ubiquitous; detected at low levels.

It is found in the cytoplasm. The enzyme catalyses S-hexadecanoyl-L-cysteinyl-[protein] + H2O = L-cysteinyl-[protein] + hexadecanoate + H(+). The catalysed reaction is prostaglandin E2 1-glyceryl ester + H2O = prostaglandin E2 + glycerol + H(+). It carries out the reaction 1-hexadecanoyl-sn-glycero-3-phosphocholine + H2O = sn-glycerol 3-phosphocholine + hexadecanoate + H(+). It catalyses the reaction 1-octadecanoyl-sn-glycero-3-phosphocholine + H2O = octadecanoate + sn-glycerol 3-phosphocholine + H(+). The enzyme catalyses 1-hexadecanoyl-sn-glycero-3-phosphate + H2O = sn-glycerol 3-phosphate + hexadecanoate + H(+). The catalysed reaction is 1-hexadecanoyl-sn-glycero-3-phospho-L-serine + H2O = sn-glycero-3-phospho-L-serine + hexadecanoate + H(+). Functionally, acts as an acyl-protein thioesterase hydrolyzing fatty acids from S-acylated cysteine residues in proteins such as trimeric G alpha proteins, GSDMD, GAP43, ZDHHC6 or HRAS. Deacylates GAP43. Mediates depalmitoylation of ZDHHC6. Has lysophospholipase activity. Hydrolyzes prostaglandin glycerol esters (PG-Gs). Hydrolyzes PG-Gs in the following order prostaglandin D2-glycerol ester (PGD2-G) &gt; prostaglandin E2 glycerol ester (PGE2-G) &gt; prostaglandin F2-alpha-glycerol ester (PGF2-alpha-G). Hydrolyzes 1-arachidonoylglycerol but not 2-arachidonoylglycerol or arachidonoylethanolamide. The protein is Acyl-protein thioesterase 2 (Lypla2) of Mus musculus (Mouse).